A 257-amino-acid polypeptide reads, in one-letter code: 3-deoxy-manno-octulosonate cytidylyltransferase (257 aa).

Belongs to the KdsB family.

It localises to the cytoplasm. The catalysed reaction is 3-deoxy-alpha-D-manno-oct-2-ulosonate + CTP = CMP-3-deoxy-beta-D-manno-octulosonate + diphosphate. The protein operates within nucleotide-sugar biosynthesis; CMP-3-deoxy-D-manno-octulosonate biosynthesis; CMP-3-deoxy-D-manno-octulosonate from 3-deoxy-D-manno-octulosonate and CTP: step 1/1. It functions in the pathway bacterial outer membrane biogenesis; lipopolysaccharide biosynthesis. Activates KDO (a required 8-carbon sugar) for incorporation into bacterial lipopolysaccharide in Gram-negative bacteria. The chain is 3-deoxy-manno-octulosonate cytidylyltransferase from Chromohalobacter salexigens (strain ATCC BAA-138 / DSM 3043 / CIP 106854 / NCIMB 13768 / 1H11).